A 353-amino-acid polypeptide reads, in one-letter code: Putative transport protein aq_740 (353 aa).

8 helical membrane passes run 4–24 (LSLF…LYLL), 28–48 (FNPI…YGFI), 60–80 (FLVI…FAVI), 156–176 (VYTA…LFFI), 209–229 (VLAV…MGFI), 240–260 (LIWA…AAFV), 268–288 (LFTT…TFLI), and 309–329 (VALF…GVFL).

The protein belongs to the autoinducer-2 exporter (AI-2E) (TC 2.A.86) family.

The protein localises to the cell membrane. The chain is Putative transport protein aq_740 from Aquifex aeolicus (strain VF5).